The chain runs to 418 residues: 3-isopropylmalate dehydratase large subunit 1 (418 aa).

The [4Fe-4S] cluster site is built by C298, C358, and C361.

Belongs to the aconitase/IPM isomerase family. LeuC type 2 subfamily. Heterodimer of LeuC and LeuD. [4Fe-4S] cluster is required as a cofactor.

It catalyses the reaction (2R,3S)-3-isopropylmalate = (2S)-2-isopropylmalate. The protein operates within amino-acid biosynthesis; L-leucine biosynthesis; L-leucine from 3-methyl-2-oxobutanoate: step 2/4. Functionally, catalyzes the isomerization between 2-isopropylmalate and 3-isopropylmalate, via the formation of 2-isopropylmaleate. This is 3-isopropylmalate dehydratase large subunit 1 from Archaeoglobus fulgidus (strain ATCC 49558 / DSM 4304 / JCM 9628 / NBRC 100126 / VC-16).